Here is a 251-residue protein sequence, read N- to C-terminus: MSGHSKWATIKRKKAATDQKRGNLFTKLVKEITIAAKMGGGDPSGNPRLRLAIDTARANSMPMDNIQRAIKKGTGELEGATYEEITYEGYGPGGIAIIIETATDNRNRTVADIRHLMSRSGGSLGENGSVGWMFNRKGSIEVPKSAISEDDLMELLLDAGLEELESDDEQYYTVLTDVKDLEPVKKALEEAEIPFENAKMDMIPDNYVELDVEDARKALKLIDALENSDDAQAVYSNMDISESVMSALEEE.

It belongs to the TACO1 family.

It is found in the cytoplasm. This chain is Probable transcriptional regulatory protein Cpar_0525, found in Chlorobaculum parvum (strain DSM 263 / NCIMB 8327) (Chlorobium vibrioforme subsp. thiosulfatophilum).